The primary structure comprises 122 residues: MNKGSIFKMDNDFEKRKAEAGRIREKYPDRIPVIVEKAEKSEVPNIDKKKYLVPSDLTVGQFVYVIRKRIKLSAEKAIFIFVDNVLPPTGELMSSVYEDKKDEDGFLYITYSGENTFGASSI.

Glycine 118 carries the Phosphatidylethanolamine amidated glycine lipid modification. Residues 119-122 (ASSI) constitute a propeptide, removed in mature form.

This sequence belongs to the ATG8 family. Interacts with ATG4. Interacts with SH3P2. Interacts with ATG1A and ATG11. Binds to ATG1A and ATG11 on autophagic vesicles. Post-translationally, the C-terminal 4 residues are removed by ATG4 to expose Gly-118 at the C-terminus. This Gly-118 forms then a thioester bond with the 'Cys-558' of ATG7 (E1-like activating enzyme) before being transferred to the 'Cys-258' of ATG3 (the specific E2 conjugating enzyme), in order to be finally amidated with phosphatidylethanolamine. This lipid modification anchors ATG8 to autophagosomes. In terms of tissue distribution, constitutively expressed.

It localises to the cytoplasmic vesicle. The protein localises to the autophagosome membrane. Its subcellular location is the vacuole membrane. The protein resides in the cytoplasm. It is found in the cytoskeleton. Ubiquitin-like modifier involved in autophagosomes formation. May mediate the delivery of the autophagosomes to the vacuole via the microtubule cytoskeleton. The sequence is that of Autophagy-related protein 8e (ATG8E) from Arabidopsis thaliana (Mouse-ear cress).